We begin with the raw amino-acid sequence, 371 residues long: MQESGYVPLKIADPALLFAELGRQPLPGMSLEEMADLMADLGEPRFRAKQLFQWVYQKGVKDFDAMTNLPARLRQHLAGTTMLRLLEKETEQHDRRTGTTKYLFRLADGSQVESVLMRQSWGNSVCVTTQVGCRMGCTFCASTVGGLVRNLTAGEIVDQIVMMQRELPQGERISTVVLMGSGEPLENYDHVLKAVRLVHDPEGLNIGYRHITISTSGIVPGMRRLAEEGLPITLALSLHAPTDELRRQLMPVARIWPLAEVLAAAREYGEKTGRRVTYEYILIEGVNDGPEEARQLARLLKGALAHVNLIPMNPVAERPQYRRPGPERVNRFKEILESNGIATTVRREMGGEIDAACGQLRNRAQRKHMGR.

Glutamate 113 functions as the Proton acceptor in the catalytic mechanism. In terms of domain architecture, Radical SAM core spans 119 to 352 (QSWGNSVCVT…TTVRREMGGE (234 aa)). Cysteine 126 and cysteine 357 are oxidised to a cystine. [4Fe-4S] cluster-binding residues include cysteine 133, cysteine 137, and cysteine 140. S-adenosyl-L-methionine is bound by residues 182 to 183 (GE), serine 214, 237 to 239 (SLH), and asparagine 313. The active-site S-methylcysteine intermediate is the cysteine 357.

It belongs to the radical SAM superfamily. RlmN family. [4Fe-4S] cluster is required as a cofactor.

It localises to the cytoplasm. It catalyses the reaction adenosine(2503) in 23S rRNA + 2 reduced [2Fe-2S]-[ferredoxin] + 2 S-adenosyl-L-methionine = 2-methyladenosine(2503) in 23S rRNA + 5'-deoxyadenosine + L-methionine + 2 oxidized [2Fe-2S]-[ferredoxin] + S-adenosyl-L-homocysteine. The enzyme catalyses adenosine(37) in tRNA + 2 reduced [2Fe-2S]-[ferredoxin] + 2 S-adenosyl-L-methionine = 2-methyladenosine(37) in tRNA + 5'-deoxyadenosine + L-methionine + 2 oxidized [2Fe-2S]-[ferredoxin] + S-adenosyl-L-homocysteine. Functionally, specifically methylates position 2 of adenine 2503 in 23S rRNA and position 2 of adenine 37 in tRNAs. This Symbiobacterium thermophilum (strain DSM 24528 / JCM 14929 / IAM 14863 / T) protein is Probable dual-specificity RNA methyltransferase RlmN.